The following is a 397-amino-acid chain: Proteinase-activated receptor 2 (397 aa).

The first 25 residues, 1 to 25 (MRSPSAAWLLGAAILLAASLSCSGT), serve as a signal peptide directing secretion. Residues 26–36 (IQGTNRSSKGR) constitute a propeptide, removed for receptor activation. Asn30 is a glycosylation site (N-linked (GlcNAc...) asparagine). Residues 37–71 (SLIGKVDGTSHVTGKGVTVETVFSVDEFSASVLTG) are Extracellular-facing. A helical transmembrane segment spans residues 72 to 101 (KLTTVFLPIVYTIVFVVGLPSNGMALWVFL). The Cytoplasmic segment spans residues 102 to 108 (FRTKKKH). Residues 109-137 (PAVIYMANLALADLLSVIWFPLKIAYHIH) form a helical membrane-spanning segment. At 138–149 (GNNWIYGEALCN) the chain is on the extracellular side. Cys148 and Cys226 are joined by a disulfide. The helical transmembrane segment at 150–177 (VLIGFFYGNMYCSILFMTCLSVQRYWVI) threads the bilayer. Residues 178–183 (VNPMGH) are Cytoplasmic-facing. A helical transmembrane segment spans residues 184-211 (SRKKANIAIGISLAIWLLILLVTIPLYV). The Extracellular portion of the chain corresponds to 212 to 235 (VKQTIFIPALNITTCHDVLPEQLL). Asn222 carries N-linked (GlcNAc...) asparagine glycosylation. Residues 236 to 269 (VGDMFNYFLSLAIGVFLFPAFLTASAYVLMIRML) form a helical membrane-spanning segment. Over 270–277 (RSSAMDEN) the chain is Cytoplasmic. The helical transmembrane segment at 278 to 317 (SEKKRKRAIKLIVTVLAMYLICFTPSNLLLVVHYFLIKSQ) threads the bilayer. Residues 318–323 (GQSHVY) lie on the Extracellular side of the membrane. The helical transmembrane segment at 324–347 (ALYIVALCLSTLNSCIDPFVYYFV) threads the bilayer. Topologically, residues 348–397 (SHDFRDHAKNALLCRSVRTVKQMQVSLTSKKHSRKSSSYSSSSTTVKTSY) are cytoplasmic. The S-palmitoyl cysteine moiety is linked to residue Cys361. The tract at residues 373-397 (SLTSKKHSRKSSSYSSSSTTVKTSY) is disordered. Residues 383–397 (SSSYSSSSTTVKTSY) show a composition bias toward low complexity.

The protein belongs to the G-protein coupled receptor 1 family. As to quaternary structure, interacts with TLR4, COPS5 and TMED2. Interacts with GNAQ, GNA11, GNA12, GNA13 and GNA14. Post-translationally, a proteolytic cleavage generates a new N-terminus that functions as a tethered ligand. Activating serine proteases include trypsin, mast cell tryptase, coagulation factors VII and Xa, myeloblastin/PRTN3 and membrane-type serine protease 1/ST14. Subsequent cleavage by serine proteases, including neutrophil elastase and cathepsin G, leads to receptor deactivation. At least in part, implicated proteases are also shown to activate the receptor; the glycosylation status of the receptor is thought to contribute to the difference. In addition to conventional trypsin-like proteases activated by other proteases and glycosidases derived from bacteria, fungi and insects. Activated by serine protease allergens such as dust mite Der p3 and Der p9 and mold Pen c13. Activated by P.gingivalis arginine-specific (trypsin-like) cysteine proteinases called gingipains. Activated by S.griseus exogenous chitinase. Activated by A.alternata aspartate protease; the cleavage generates non-conventional processed forms. Proteolytically cleaved by coagulation factor Xa (F10); cleavage results in activation of F2RL1-dependent signaling. N-glycosylated and sialylated. In terms of processing, multiple phosphorylated on serine and threonine residues in the cytoplasmic region upon receptor activation; required for receptor desensitization and recruitment of beta-arrestin. Post-translationally, monoubiquitinated by CBL at the plasma membrane and in early endosomes; not required for receptor endocytosis but for translocation to late endosomes or lysosomes. Deubiquitination involves STAMBP and USP8; required for lysosomal trafficking and receptor degradation. Widely expressed in tissues with especially high levels in pancreas, liver, kidney, small intestine, and colon. Moderate expression is detected in many organs, but none in brain or skeletal muscle. Expressed in endothelial cells.

The protein localises to the cell membrane. Activated upon interaction by mucunain, a cowhage (Mucuna pruriens) plant cysteine proteinase. Receptor for trypsin and trypsin-like enzymes coupled to G proteins. Its function is mediated through the activation of several signaling pathways including phospholipase C (PLC), intracellular calcium, mitogen-activated protein kinase (MAPK), I-kappaB kinase/NF-kappaB and Rho. Can also be transactivated by cleaved F2R/PAR1. Involved in modulation of inflammatory responses and regulation of innate and adaptive immunity, and acts as a sensor for proteolytic enzymes generated during infection. Generally is promoting inflammation. Can signal synergistically with TLR4 and probably TLR2 in inflammatory responses and modulates TLR3 signaling. Has a protective role in establishing the endothelial barrier; the activity involves coagulation factor X. Regulates endothelial cell barrier integrity during neutrophil extravasation, probably following proteolytic cleavage by PRTN3. Proposed to have a bronchoprotective role in airway epithelium, but also shown to compromise the airway epithelial barrier by interrupting E-cadherin adhesion. Involved in the regulation of vascular tone; activation results in hypotension presumably mediated by vasodilation. Associates with a subset of G proteins alpha subunits such as GNAQ, GNA11, GNA14, GNA12 and GNA13, but probably not with G(o)-alpha, G(i) subunit alpha-1 and G(i) subunit alpha-2. However, according to PubMed:21627585 can signal through G(i) subunit alpha. Believed to be a class B receptor which internalizes as a complex with arrestin and traffic with it to endosomal vesicles, presumably as desensitized receptor, for extended periods of time. Mediates inhibition of TNF-alpha stimulated JNK phosphorylation via coupling to GNAQ and GNA11; the function involves dissociation of RIPK1 and TRADD from TNFR1. Mediates phosphorylation of nuclear factor NF-kappa-B RELA subunit at 'Ser-536'; the function involves IKBKB and is predominantly independent of G proteins. Involved in cellular migration. Involved in cytoskeletal rearrangement and chemotaxis through beta-arrestin-promoted scaffolds; the function is independent of GNAQ and GNA11 and involves promotion of cofilin dephosphorylation and actin filament severing. Induces redistribution of COPS5 from the plasma membrane to the cytosol and activation of the JNK cascade is mediated by COPS5. Involved in the recruitment of leukocytes to the sites of inflammation and is the major PAR receptor capable of modulating eosinophil function such as pro-inflammatory cytokine secretion, superoxide production and degranulation. During inflammation promotes dendritic cell maturation, trafficking to the lymph nodes and subsequent T-cell activation. Involved in antimicrobial response of innate immune cells; activation enhances phagocytosis of Gram-positive and killing of Gram-negative bacteria. Acts synergistically with interferon-gamma in enhancing antiviral responses. Implicated in a number of acute and chronic inflammatory diseases such as of the joints, lungs, brain, gastrointestinal tract, periodontium, skin, and vascular systems, and in autoimmune disorders. Probably mediates activation of pro-inflammatory and pro-fibrotic responses in fibroblasts, triggered by coagulation factor Xa (F10). Mediates activation of barrier protective signaling responses in endothelial cells, triggered by coagulation factor Xa (F10). This chain is Proteinase-activated receptor 2 (F2RL1), found in Homo sapiens (Human).